A 444-amino-acid chain; its full sequence is S-locus-specific glycoprotein (444 aa).

A signal peptide spans 1–28 (MRGVIPNYHHSYTLFFFVILVLFPHVFS). The 129-residue stretch at 31-159 (TLSPNEALTI…KTNDLDRFMW (129 aa)) folds into the Bulb-type lectin domain. 4 N-linked (GlcNAc...) asparagine glycosylation sites follow: Asn43, Asn125, Asn243, and Asn396. The PAN domain maps to 356–437 (CGEGDGFLRM…GGQDLYVKVA (82 aa)). Disulfide bonds link Cys387/Cys412 and Cys395/Cys397.

In terms of tissue distribution, stigma.

Its function is as follows. Involved in sporophytic self-incompatibility system (the inability of flowering plants to achieve self-fertilization). The polypeptide is S-locus-specific glycoprotein (SLSG) (Brassica oleracea var. alboglabra (Chinese kale)).